Consider the following 80-residue polypeptide: ATP synthase subunit c (80 aa).

2 helical membrane-spanning segments follow: residues 11-31 (MAAAVMMGLAAIGAAIGIGIL) and 53-73 (FFVVMGLVDAIPMIAVGLGLY).

This sequence belongs to the ATPase C chain family. As to quaternary structure, F-type ATPases have 2 components, F(1) - the catalytic core - and F(0) - the membrane proton channel. F(1) has five subunits: alpha(3), beta(3), gamma(1), delta(1), epsilon(1). F(0) has three main subunits: a(1), b(2) and c(10-14). The alpha and beta chains form an alternating ring which encloses part of the gamma chain. F(1) is attached to F(0) by a central stalk formed by the gamma and epsilon chains, while a peripheral stalk is formed by the delta and b chains.

It localises to the cell inner membrane. Its function is as follows. F(1)F(0) ATP synthase produces ATP from ADP in the presence of a proton or sodium gradient. F-type ATPases consist of two structural domains, F(1) containing the extramembraneous catalytic core and F(0) containing the membrane proton channel, linked together by a central stalk and a peripheral stalk. During catalysis, ATP synthesis in the catalytic domain of F(1) is coupled via a rotary mechanism of the central stalk subunits to proton translocation. Functionally, key component of the F(0) channel; it plays a direct role in translocation across the membrane. A homomeric c-ring of between 10-14 subunits forms the central stalk rotor element with the F(1) delta and epsilon subunits. This chain is ATP synthase subunit c, found in Erwinia tasmaniensis (strain DSM 17950 / CFBP 7177 / CIP 109463 / NCPPB 4357 / Et1/99).